Here is a 245-residue protein sequence, read N- to C-terminus: 2,3-bisphosphoglycerate-dependent phosphoglycerate mutase (245 aa).

Substrate-binding positions include 8–15 (RHGQSLWN), 21–22 (TG), R60, 87–90 (ERHY), K98, 114–115 (RR), and 183–184 (GN). Catalysis depends on H9, which acts as the Tele-phosphohistidine intermediate. E87 serves as the catalytic Proton donor/acceptor.

Belongs to the phosphoglycerate mutase family. BPG-dependent PGAM subfamily.

The catalysed reaction is (2R)-2-phosphoglycerate = (2R)-3-phosphoglycerate. Its pathway is carbohydrate degradation; glycolysis; pyruvate from D-glyceraldehyde 3-phosphate: step 3/5. Catalyzes the interconversion of 2-phosphoglycerate and 3-phosphoglycerate. The sequence is that of 2,3-bisphosphoglycerate-dependent phosphoglycerate mutase from Bacillus mycoides (strain KBAB4) (Bacillus weihenstephanensis).